The primary structure comprises 153 residues: UPF0756 membrane protein LCABL_15860 (153 aa).

Helical transmembrane passes span 4-24 (WLFL…SLII), 52-72 (WGVT…EIGF), 85-105 (WIAI…VGLL), and 115-135 (LVFG…GPVI).

The protein belongs to the UPF0756 family.

The protein resides in the cell membrane. The polypeptide is UPF0756 membrane protein LCABL_15860 (Lacticaseibacillus casei (strain BL23) (Lactobacillus casei)).